A 228-amino-acid chain; its full sequence is Urease accessory protein UreF (228 aa).

Belongs to the UreF family. In terms of assembly, ureD, UreF and UreG form a complex that acts as a GTP-hydrolysis-dependent molecular chaperone, activating the urease apoprotein by helping to assemble the nickel containing metallocenter of UreC. The UreE protein probably delivers the nickel.

The protein resides in the cytoplasm. Required for maturation of urease via the functional incorporation of the urease nickel metallocenter. The protein is Urease accessory protein UreF of Blochmanniella pennsylvanica (strain BPEN).